The sequence spans 217 residues: Transmembrane protein 247 (217 aa).

Positions 1–10 (MATEDREMME) are enriched in basic and acidic residues. A disordered region spans residues 1–87 (MATEDREMME…GPATTKGQAG (87 aa)). Residues 109–154 (RERDAEMELEKVRMEFELKRLKYLHEENERQRQHEEVMEQLQQQAT) are a coiled coil. 2 consecutive transmembrane segments (helical) span residues 165–185 (LLLPQNQFAMFLYCFIFIHII) and 192–212 (IFFLFSKHYLFCIAAILLCLI).

Its subcellular location is the membrane. This is Transmembrane protein 247 from Bos taurus (Bovine).